The following is a 343-amino-acid chain: Dihydroorotate dehydrogenase (quinone) (343 aa).

FMN contacts are provided by residues 65-69 (AGFDK) and Thr-89. Lys-69 serves as a coordination point for substrate. Residue 114–118 (NRMGF) coordinates substrate. Residues Asn-145 and Asn-178 each contribute to the FMN site. Asn-178 lines the substrate pocket. Ser-181 acts as the Nucleophile in catalysis. Asn-183 is a binding site for substrate. Residues Lys-215 and Thr-243 each coordinate FMN. Position 244–245 (244–245 (NT)) interacts with substrate. Residues Gly-269, Gly-298, and 319–320 (YT) contribute to the FMN site.

The protein belongs to the dihydroorotate dehydrogenase family. Type 2 subfamily. Monomer. FMN is required as a cofactor.

The protein localises to the cell membrane. It carries out the reaction (S)-dihydroorotate + a quinone = orotate + a quinol. It participates in pyrimidine metabolism; UMP biosynthesis via de novo pathway; orotate from (S)-dihydroorotate (quinone route): step 1/1. Catalyzes the conversion of dihydroorotate to orotate with quinone as electron acceptor. The chain is Dihydroorotate dehydrogenase (quinone) from Leifsonia xyli subsp. xyli (strain CTCB07).